Consider the following 209-residue polypeptide: Thymidine kinase (209 aa).

Residues Ala9–Ser16 and Asp88–Gln91 contribute to the ATP site. The active-site Proton acceptor is Glu89. Residues Cys146, Cys148, Cys183, and His186 each coordinate Zn(2+).

Belongs to the thymidine kinase family. As to quaternary structure, homotetramer.

The protein localises to the cytoplasm. The enzyme catalyses thymidine + ATP = dTMP + ADP + H(+). The sequence is that of Thymidine kinase from Legionella pneumophila (strain Paris).